A 480-amino-acid polypeptide reads, in one-letter code: Sulfate adenylyltransferase subunit 1 (480 aa).

Positions 30–248 (KGLLRFLTCG…TVDVKKEASK (219 aa)) constitute a tr-type G domain. The tract at residues 39–46 (GSVDDGKS) is G1. 39–46 (GSVDDGKS) provides a ligand contact to GTP. Residues 97 to 101 (GITID) form a G2 region. A G3 region spans residues 118 to 121 (DTPG). GTP contacts are provided by residues 118-122 (DTPGH) and 173-176 (NKMD). Positions 173 to 176 (NKMD) are G4. Residues 211 to 213 (SAL) are G5.

The protein belongs to the TRAFAC class translation factor GTPase superfamily. Classic translation factor GTPase family. CysN/NodQ subfamily. As to quaternary structure, heterodimer composed of CysD, the smaller subunit, and CysN.

It carries out the reaction sulfate + ATP + H(+) = adenosine 5'-phosphosulfate + diphosphate. Its pathway is sulfur metabolism; hydrogen sulfide biosynthesis; sulfite from sulfate: step 1/3. Functionally, with CysD forms the ATP sulfurylase (ATPS) that catalyzes the adenylation of sulfate producing adenosine 5'-phosphosulfate (APS) and diphosphate, the first enzymatic step in sulfur assimilation pathway. APS synthesis involves the formation of a high-energy phosphoric-sulfuric acid anhydride bond driven by GTP hydrolysis by CysN coupled to ATP hydrolysis by CysD. The protein is Sulfate adenylyltransferase subunit 1 of Photorhabdus laumondii subsp. laumondii (strain DSM 15139 / CIP 105565 / TT01) (Photorhabdus luminescens subsp. laumondii).